The chain runs to 273 residues: Dermonecrotic toxin LhSicTox-alphaIA1iii (273 aa).

Residue H5 is part of the active site. Positions 25 and 27 each coordinate Mg(2+). Catalysis depends on H41, which acts as the Nucleophile. Intrachain disulfides connect C45–C51 and C47–C190. Mg(2+) is bound at residue D85.

The protein belongs to the arthropod phospholipase D family. Class II subfamily. It depends on Mg(2+) as a cofactor. As to expression, expressed by the venom gland.

It localises to the secreted. It catalyses the reaction an N-(acyl)-sphingosylphosphocholine = an N-(acyl)-sphingosyl-1,3-cyclic phosphate + choline. The enzyme catalyses an N-(acyl)-sphingosylphosphoethanolamine = an N-(acyl)-sphingosyl-1,3-cyclic phosphate + ethanolamine. The catalysed reaction is a 1-acyl-sn-glycero-3-phosphocholine = a 1-acyl-sn-glycero-2,3-cyclic phosphate + choline. It carries out the reaction a 1-acyl-sn-glycero-3-phosphoethanolamine = a 1-acyl-sn-glycero-2,3-cyclic phosphate + ethanolamine. Its function is as follows. Dermonecrotic toxins cleave the phosphodiester linkage between the phosphate and headgroup of certain phospholipids (sphingolipid and lysolipid substrates), forming an alcohol (often choline) and a cyclic phosphate. This toxin acts on sphingomyelin (SM). It may also act on ceramide phosphoethanolamine (CPE), lysophosphatidylcholine (LPC) and lysophosphatidylethanolamine (LPE), but not on lysophosphatidylserine (LPS), and lysophosphatidylglycerol (LPG). It acts by transphosphatidylation, releasing exclusively cyclic phosphate products as second products. Induces dermonecrosis, hemolysis, increased vascular permeability, edema, inflammatory response, and platelet aggregation. This is Dermonecrotic toxin LhSicTox-alphaIA1iii from Loxosceles hirsuta (Recluse spider).